Here is a 405-residue protein sequence, read N- to C-terminus: L-rhamnonate dehydratase (405 aa).

2 residues coordinate substrate: His-33 and Arg-59. Asp-226, Glu-252, and Glu-280 together coordinate Mg(2+). The active-site Proton acceptor is the His-329. Glu-349 is a substrate binding site.

This sequence belongs to the mandelate racemase/muconate lactonizing enzyme family. RhamD subfamily. In terms of assembly, homooctamer; tetramer of dimers. Mg(2+) serves as cofactor.

The catalysed reaction is L-rhamnonate = 2-dehydro-3-deoxy-L-rhamnonate + H2O. Its function is as follows. Catalyzes the dehydration of L-rhamnonate to 2-keto-3-deoxy-L-rhamnonate (KDR). This Escherichia coli O9:H4 (strain HS) protein is L-rhamnonate dehydratase.